The sequence spans 308 residues: Probable inositol oxygenase (308 aa).

Substrate is bound by residues arginine 49 and 106–108 (DDS). Residues histidine 119, histidine 144, and aspartate 145 each coordinate Fe cation. Residues lysine 148 and 165-166 (GD) contribute to the substrate site. Residues histidine 217, histidine 243, and aspartate 276 each contribute to the Fe cation site. 243–244 (HS) contributes to the substrate binding site.

It belongs to the myo-inositol oxygenase family. Fe cation serves as cofactor.

The protein resides in the cytoplasm. The catalysed reaction is myo-inositol + O2 = D-glucuronate + H2O + H(+). It functions in the pathway polyol metabolism; myo-inositol degradation into D-glucuronate; D-glucuronate from myo-inositol: step 1/1. Involved in the biosynthesis of UDP-glucuronic acid (UDP-GlcA), providing nucleotide sugars for cell-wall polymers. May be also involved in plant ascorbate biosynthesis. The polypeptide is Probable inositol oxygenase (Oryza sativa subsp. japonica (Rice)).